The chain runs to 878 residues: Fanconi-associated nuclease 1 homolog (878 aa).

A UBZ4-type zinc finger spans residues 32-59 (GKTCPLCNIKFSLASYRSHMNVCKVADD). Residues cysteine 35, cysteine 38, histidine 50, and cysteine 54 each contribute to the Zn(2+) site. Residues 88 to 180 (ENSGQEIPVN…QKSQSESQEA (93 aa)) are disordered. Over residues 142–161 (SEVRSVEKEIKKSPVWENRR) the composition is skewed to basic and acidic residues. Positions 168 to 179 (QNSQKSQSESQE) are enriched in low complexity. Glutamate 695, aspartate 823, glutamate 838, and valine 839 together coordinate Mn(2+). A VRR-NUC domain is found at 757–870 (QETIEDNIRR…GIKAEVCHVE (114 aa)).

Belongs to the FAN1 family. It depends on Mn(2+) as a cofactor. Mg(2+) serves as cofactor.

The protein localises to the nucleus. The catalysed reaction is Hydrolytically removes 5'-nucleotides successively from the 3'-hydroxy termini of 3'-hydroxy-terminated oligonucleotides.. Nuclease required for the repair of DNA interstrand cross-links (ICL). Acts as a 5'-3' exonuclease that anchors at a cut end of DNA and cleaves DNA successively at every third nucleotide, allowing to excise an ICL from one strand through flanking incisions. The chain is Fanconi-associated nuclease 1 homolog (fan-1) from Caenorhabditis briggsae.